The sequence spans 227 residues: Cytidylate kinase (227 aa).

Residue 7 to 15 (GPSGAGKGT) coordinates ATP.

This sequence belongs to the cytidylate kinase family. Type 1 subfamily.

Its subcellular location is the cytoplasm. It catalyses the reaction CMP + ATP = CDP + ADP. It carries out the reaction dCMP + ATP = dCDP + ADP. This Actinobacillus succinogenes (strain ATCC 55618 / DSM 22257 / CCUG 43843 / 130Z) protein is Cytidylate kinase.